We begin with the raw amino-acid sequence, 545 residues long: Membrane protein insertase YidC (545 aa).

The chain crosses the membrane as a helical span at residues 6–26; it reads FVLFVFFIFLSFLLWEQWQID. Positions 32 to 69 are disordered; the sequence is QAVAQTDGASRPAGDLPQRPSDDESDVTVHTEAPTQEG. Helical transmembrane passes span 354 to 374, 425 to 445, 462 to 482, and 500 to 520; these read FFNN…ALFF, GGCL…WVLV, LSSK…MFIQ, and FFPL…VLYW.

It belongs to the OXA1/ALB3/YidC family. Type 1 subfamily. As to quaternary structure, interacts with the Sec translocase complex via SecD. Specifically interacts with transmembrane segments of nascent integral membrane proteins during membrane integration.

Its subcellular location is the cell inner membrane. Its function is as follows. Required for the insertion and/or proper folding and/or complex formation of integral membrane proteins into the membrane. Involved in integration of membrane proteins that insert both dependently and independently of the Sec translocase complex, as well as at least some lipoproteins. Aids folding of multispanning membrane proteins. The polypeptide is Membrane protein insertase YidC (Methylococcus capsulatus (strain ATCC 33009 / NCIMB 11132 / Bath)).